The sequence spans 1003 residues: Translation initiation factor IF-2 (1003 aa).

Residues 36 to 392 (SSTIEPPVVK…RQKRNEYESM (357 aa)) form a disordered region. Residues 62–151 (AAKPAAAKPA…PKPAAAAKPA (90 aa)) show a composition bias toward low complexity. 2 stretches are compositionally biased toward pro residues: residues 178 to 190 (DGMP…PAPK) and 213 to 230 (PRPG…PGGG). Composition is skewed to gly residues over residues 231–243 (PRPQ…GGQR) and 255–271 (GNRG…GPRP). Over residues 273–286 (GGPRPQGGSRPQGG) the composition is skewed to low complexity. The segment covering 329–372 (GKGGRGGQAGGGAGGGFNRGGGTGGGAGRGGRRGGTAGAFGRPG) has biased composition (gly residues). The span at 376-385 (RRGRKSKRQK) shows a compositional bias: basic residues. The tr-type G domain maps to 498–670 (KRPPVVTVMG…VCLTADAELD (173 aa)). Residues 507 to 514 (GHVDHGKT) are G1. 507-514 (GHVDHGKT) contacts GTP. The interval 532-536 (GITQG) is G2. The interval 557-560 (DTPG) is G3. Residues 557-561 (DTPGH) and 611-614 (NKID) each bind GTP. The segment at 611 to 614 (NKID) is G4. Positions 647–649 (SAK) are G5.

It belongs to the TRAFAC class translation factor GTPase superfamily. Classic translation factor GTPase family. IF-2 subfamily.

The protein localises to the cytoplasm. Functionally, one of the essential components for the initiation of protein synthesis. Protects formylmethionyl-tRNA from spontaneous hydrolysis and promotes its binding to the 30S ribosomal subunits. Also involved in the hydrolysis of GTP during the formation of the 70S ribosomal complex. This is Translation initiation factor IF-2 from Corynebacterium glutamicum (strain R).